The primary structure comprises 371 residues: tRNA-specific 2-thiouridylase MnmA (371 aa).

Residues 13–20 and Met-39 contribute to the ATP site; that span reads GMSGGVDS. An interaction with target base in tRNA region spans residues 99 to 101; the sequence is NPD. Residue Cys-104 is the Nucleophile of the active site. Cys-104 and Cys-200 are oxidised to a cystine. Gly-128 serves as a coordination point for ATP. An interaction with tRNA region spans residues 150–152; the sequence is KDQ. Cys-200 (cysteine persulfide intermediate) is an active-site residue. Positions 308 to 309 are interaction with tRNA; it reads RY.

The protein belongs to the MnmA/TRMU family.

Its subcellular location is the cytoplasm. The enzyme catalyses S-sulfanyl-L-cysteinyl-[protein] + uridine(34) in tRNA + AH2 + ATP = 2-thiouridine(34) in tRNA + L-cysteinyl-[protein] + A + AMP + diphosphate + H(+). Catalyzes the 2-thiolation of uridine at the wobble position (U34) of tRNA, leading to the formation of s(2)U34. This chain is tRNA-specific 2-thiouridylase MnmA, found in Listeria innocua serovar 6a (strain ATCC BAA-680 / CLIP 11262).